The following is a 119-amino-acid chain: MISKIDKNKVRLKRHARVRTNLSGTAEKPRLNVYRSNKHIYAQIIDDNKGVTLAQASSKDSDIATTATKVELATKVGEAIAKKATDKGIKEIVFDRGGYLYHGRVKALAEAARESGLEF.

This sequence belongs to the universal ribosomal protein uL18 family. Part of the 50S ribosomal subunit; part of the 5S rRNA/L5/L18/L25 subcomplex. Contacts the 5S and 23S rRNAs.

Its function is as follows. This is one of the proteins that bind and probably mediate the attachment of the 5S RNA into the large ribosomal subunit, where it forms part of the central protuberance. The protein is Large ribosomal subunit protein uL18 of Staphylococcus aureus (strain bovine RF122 / ET3-1).